Consider the following 570-residue polypeptide: Low-affinity glucose transporter HXT1 (570 aa).

The segment covering 1–20 has biased composition (polar residues); it reads MNSTPDLISPQKSNSSNSYE. A disordered region spans residues 1 to 51; the sequence is MNSTPDLISPQKSNSSNSYELESGRSKAMNTPEGKNESFHDNLSESQVQPA. Residues 1 to 60 are Cytoplasmic-facing; it reads MNSTPDLISPQKSNSSNSYELESGRSKAMNTPEGKNESFHDNLSESQVQPAVAPPNTGKG. Phosphoserine is present on residues Ser23, Ser38, and Ser44. A compositionally biased stretch (basic and acidic residues) spans 34-43; sequence GKNESFHDNL. Residues 61 to 81 traverse the membrane as a helical segment; sequence VYVTVSICCVMVAFGGFIFGW. Residues 82–116 lie on the Extracellular side of the membrane; that stretch reads DTGTISGFVAQTDFLRRFGMKHHDGSHYLSKVRTG. The chain crosses the membrane as a helical span at residues 117 to 137; it reads LIVSIFNIGCAIGGIVLAKLG. Topologically, residues 138–143 are cytoplasmic; sequence DMYGRR. Residues 144–164 form a helical membrane-spanning segment; it reads IGLIVVVVIYTIGIIIQIASI. Residues 165-174 are Extracellular-facing; the sequence is NKWYQYFIGR. A helical membrane pass occupies residues 175 to 195; sequence IISGLGVGGITVLSPMLISEV. The Cytoplasmic segment spans residues 196–201; that stretch reads APSEMR. A helical membrane pass occupies residues 202 to 222; it reads GTLVSCYQVMITLGIFLGYCT. Over 223–236 the chain is Extracellular; sequence NFGTKNYSNSVQWR. An N-linked (GlcNAc...) asparagine glycan is attached at Asn228. Residues 237-257 form a helical membrane-spanning segment; sequence VPLGLCFAWALFMIGGMMFVP. Residues 258-340 lie on the Cytoplasmic side of the membrane; the sequence is ESPRYLVEAG…IQSLQQLTGD (83 aa). The helical transmembrane segment at 341–357 threads the bilayer; that stretch reads NYFFYYGTIVFQAVGLS. Topologically, residues 358–363 are extracellular; sequence DSFETS. Residues 364-381 traverse the membrane as a helical segment; sequence IVFGVVNFFSTCCSLYTV. At 382 to 388 the chain is on the cytoplasmic side; it reads DRFGRRN. Residues 389–409 form a helical membrane-spanning segment; that stretch reads CLMWGAVGMVCCYVVYASVGV. Residues 410–431 are Extracellular-facing; that stretch reads TRLWPNGQDQPSSKGAGNCMIV. A helical membrane pass occupies residues 432–452; it reads FACFYIFCFATTWAPIAYVVI. Residues 453–469 lie on the Cytoplasmic side of the membrane; it reads SECFPLRVKSKCMSIAS. A helical transmembrane segment spans residues 470–490; sequence AANWIWGFLISFFTPFITGAI. Residue Asn491 is a topological domain, extracellular. Residues 492–512 form a helical membrane-spanning segment; that stretch reads FYYGYVFMGCMVFAYFYVFFF. Over 513–570 the chain is Cytoplasmic; that stretch reads VPETKGLSLEEVNDMYAEGVLPWKSASWVPVSKRGADYNADDLMHDDQPFYKSLFSRK.

This sequence belongs to the major facilitator superfamily. Sugar transporter (TC 2.A.1.1) family.

It is found in the membrane. Low-affinity glucose transporter. HXT1 is as well involved in the transport of mannose. The protein is Low-affinity glucose transporter HXT1 (HXT1) of Saccharomyces cerevisiae (strain ATCC 204508 / S288c) (Baker's yeast).